A 384-amino-acid polypeptide reads, in one-letter code: Galactokinase (384 aa).

Position 34–37 (34–37 (EHTD)) interacts with substrate. An ATP-binding site is contributed by 123–129 (SSGLSSS). Residues Ser129 and Glu161 each contribute to the Mg(2+) site. Asp173 functions as the Proton acceptor in the catalytic mechanism. Tyr222 serves as a coordination point for substrate.

This sequence belongs to the GHMP kinase family. GalK subfamily.

It localises to the cytoplasm. It catalyses the reaction alpha-D-galactose + ATP = alpha-D-galactose 1-phosphate + ADP + H(+). It functions in the pathway carbohydrate metabolism; galactose metabolism. In terms of biological role, catalyzes the transfer of the gamma-phosphate of ATP to D-galactose to form alpha-D-galactose-1-phosphate (Gal-1-P). The protein is Galactokinase of Haemophilus influenzae (strain PittEE).